The chain runs to 276 residues: MGNKLFVLDLGEIRVDENFIIANSTFVTPQKPTVSSRLIDIPVSAYLIQCTDATVLYDTGCHPECMGTNGRWPAQSQLNAPYIGASECNLPERLRQLGLSPDDISTVVLSHLHNDHAGCVEYFGKSRLIAHEDEFATAVRYFATGDHSSPYIVKDIEAWLATPRNWDLVGRDERERELAPGVNLLNFGTGHASGMLGLAVRLEKQPGFLLVSDACYTATNYGPPARRAGVLHDTIGYDRTVSHIRQYAESRSLTVLFGHDREQFASLIKSTDGFYE.

6 residues coordinate Zn(2+): histidine 111, histidine 113, histidine 116, histidine 191, aspartate 213, and histidine 259.

The protein belongs to the metallo-beta-lactamase superfamily. Zn(2+) is required as a cofactor.

The catalysed reaction is an N-acyl-L-homoserine lactone + H2O = an N-acyl-L-homoserine + H(+). This Agrobacterium fabrum (strain C58 / ATCC 33970) (Agrobacterium tumefaciens (strain C58)) protein is N-acyl homoserine lactonase AiiB.